A 483-amino-acid chain; its full sequence is Uridine/cytidine kinase UKL1, chloroplastic (483 aa).

A chloroplast-targeting transit peptide spans 1–47 (MPEDSTAIDYVMEKASGPHFSGLRLDGLLSSPSKSSVSSPSHFRLSN). Positions 59–264 (PHQPFVIGVT…IVQHIHTKLG (206 aa)) are uridine kinase. Positions 274-483 (NVFVIETTFQ…FGDRYFGTDE (210 aa)) are uracil phosphoribosyltransferase. GTP-binding positions include Lys-298, Arg-307, and 341–344 (CKKL). Residues Arg-351 and Arg-376 each contribute to the 5-phospho-alpha-D-ribose 1-diphosphate site. Arg-396 is a GTP binding site. Residues Asp-402, 407-410 (TGNS), and Glu-473 each bind 5-phospho-alpha-D-ribose 1-diphosphate. 472–474 (GEF) is a binding site for uracil.

This sequence in the N-terminal section; belongs to the uridine kinase family. The protein in the C-terminal section; belongs to the UPRTase family.

It localises to the plastid. The protein localises to the chloroplast. The enzyme catalyses cytidine + ATP = CMP + ADP + H(+). It carries out the reaction uridine + ATP = UMP + ADP + H(+). Its pathway is pyrimidine metabolism; CTP biosynthesis via salvage pathway; CTP from cytidine: step 1/3. It functions in the pathway pyrimidine metabolism; UMP biosynthesis via salvage pathway; UMP from uridine: step 1/1. Its function is as follows. Involved in the pyrimidine salvage pathway. Phosphorylates uridine to uridine monophosphate (UMP). Phosphorylates cytidine to cytidine monophosphate (CMP). Does not possess uracil phosphoribosyltransferase (UPRTase) activity that catalyzes the conversion of uracil and 5-phospho-alpha-D-ribose 1-diphosphate (PRPP) to UMP and diphosphate. This is Uridine/cytidine kinase UKL1, chloroplastic from Arabidopsis thaliana (Mouse-ear cress).